Reading from the N-terminus, the 540-residue chain is Phosphoenolpyruvate carboxykinase (ATP) (540 aa).

Arg65 contributes to the substrate binding site. Lys87 carries the N6-acetyllysine modification. Residues Tyr207 and Lys213 each coordinate substrate. Residues Lys213, His232, and 248 to 256 (GLSGTGKTT) contribute to the ATP site. Residues Lys213 and His232 each coordinate Mn(2+). Asp269 contacts Mn(2+). ATP contacts are provided by residues Glu297, Arg333, 449–450 (RI), and Thr455. A substrate-binding site is contributed by Arg333. An N6-acetyllysine modification is found at Lys523.

Belongs to the phosphoenolpyruvate carboxykinase (ATP) family. Monomer. Requires Mn(2+) as cofactor.

The protein localises to the cytoplasm. It catalyses the reaction oxaloacetate + ATP = phosphoenolpyruvate + ADP + CO2. It functions in the pathway carbohydrate biosynthesis; gluconeogenesis. Its function is as follows. Involved in the gluconeogenesis. Catalyzes the conversion of oxaloacetate (OAA) to phosphoenolpyruvate (PEP) through direct phosphoryl transfer between the nucleoside triphosphate and OAA. The sequence is that of Phosphoenolpyruvate carboxykinase (ATP) from Shigella flexneri serotype 5b (strain 8401).